Reading from the N-terminus, the 423-residue chain is Structure-specific endonuclease subunit SLX1 (423 aa).

Residues 23–105 (AFYCCYLLRS…QNTKVSRHAD (83 aa)) form the GIY-YIG domain. 2 disordered regions span residues 300 to 334 (RRRRQAGTPKGQGLKSVRGRGRGRGHSEDESDALQ) and 365 to 406 (AHRP…LGLQ).

This sequence belongs to the SLX1 family. Forms a heterodimer with SLX4. The cofactor is a divalent metal cation.

Its subcellular location is the nucleus. Functionally, catalytic subunit of the SLX1-SLX4 structure-specific endonuclease that resolves DNA secondary structures generated during DNA repair and recombination. Has endonuclease activity towards branched DNA substrates, introducing single-strand cuts in duplex DNA close to junctions with ss-DNA. The polypeptide is Structure-specific endonuclease subunit SLX1 (Paracoccidioides brasiliensis (strain Pb03)).